Consider the following 251-residue polypeptide: Ubiquinone/menaquinone biosynthesis C-methyltransferase UbiE (251 aa).

S-adenosyl-L-methionine contacts are provided by residues Thr74, Asp95, and 123–124 (NA).

Belongs to the class I-like SAM-binding methyltransferase superfamily. MenG/UbiE family.

The enzyme catalyses a 2-demethylmenaquinol + S-adenosyl-L-methionine = a menaquinol + S-adenosyl-L-homocysteine + H(+). It carries out the reaction a 2-methoxy-6-(all-trans-polyprenyl)benzene-1,4-diol + S-adenosyl-L-methionine = a 5-methoxy-2-methyl-3-(all-trans-polyprenyl)benzene-1,4-diol + S-adenosyl-L-homocysteine + H(+). The protein operates within quinol/quinone metabolism; menaquinone biosynthesis; menaquinol from 1,4-dihydroxy-2-naphthoate: step 2/2. It participates in cofactor biosynthesis; ubiquinone biosynthesis. Methyltransferase required for the conversion of demethylmenaquinol (DMKH2) to menaquinol (MKH2) and the conversion of 2-polyprenyl-6-methoxy-1,4-benzoquinol (DDMQH2) to 2-polyprenyl-3-methyl-6-methoxy-1,4-benzoquinol (DMQH2). The polypeptide is Ubiquinone/menaquinone biosynthesis C-methyltransferase UbiE (Shewanella pealeana (strain ATCC 700345 / ANG-SQ1)).